Reading from the N-terminus, the 207-residue chain is ATP-dependent Clp protease proteolytic subunit (207 aa).

The Nucleophile role is filled by serine 111. Histidine 136 is an active-site residue.

The protein belongs to the peptidase S14 family. Fourteen ClpP subunits assemble into 2 heptameric rings which stack back to back to give a disk-like structure with a central cavity, resembling the structure of eukaryotic proteasomes. Component of the ClpAP and ClpXP complexes.

The protein resides in the cytoplasm. It carries out the reaction Hydrolysis of proteins to small peptides in the presence of ATP and magnesium. alpha-casein is the usual test substrate. In the absence of ATP, only oligopeptides shorter than five residues are hydrolyzed (such as succinyl-Leu-Tyr-|-NHMec, and Leu-Tyr-Leu-|-Tyr-Trp, in which cleavage of the -Tyr-|-Leu- and -Tyr-|-Trp bonds also occurs).. In terms of biological role, cleaves peptides in various proteins in a process that requires ATP hydrolysis. Has a chymotrypsin-like activity. Plays a major role in the degradation of misfolded proteins. This chain is ATP-dependent Clp protease proteolytic subunit, found in Salmonella enteritidis PT4 (strain P125109).